The following is a 372-amino-acid chain: Cytochrome b (372 aa).

A run of 4 helical transmembrane segments spans residues 25-45 (FGSMLLTCLILQIMTGFFLAI), 69-90 (WIMQNLHAIGASLFFICIYIHI), 105-125 (WLSGTTLLIILMATAFFGYVL), and 170-190 (FFALHFILPFTIISLSSIHII). The heme b site is built by histidine 75 and histidine 89. Heme b is bound by residues histidine 174 and histidine 188. Histidine 193 provides a ligand contact to a ubiquinone. A run of 4 helical transmembrane segments spans residues 218–238 (YKDMLMIIIMTAILFLILSFS), 280–300 (LGGTLALVMSVMILTTAPFTH), 312–332 (LSQIVFWTLIATFITITWTAT), and 339–358 (FISISQTASIFYFSFFIMNP).

Belongs to the cytochrome b family. The cytochrome bc1 complex contains 3 respiratory subunits (MT-CYB, CYC1 and UQCRFS1), 2 core proteins (UQCRC1 and UQCRC2) and probably 6 low-molecular weight proteins. Heme b is required as a cofactor.

Its subcellular location is the mitochondrion inner membrane. Functionally, component of the ubiquinol-cytochrome c reductase complex (complex III or cytochrome b-c1 complex) that is part of the mitochondrial respiratory chain. The b-c1 complex mediates electron transfer from ubiquinol to cytochrome c. Contributes to the generation of a proton gradient across the mitochondrial membrane that is then used for ATP synthesis. The polypeptide is Cytochrome b (MT-CYB) (Walterinnesia aegyptia (Desert black snake)).